Here is a 260-residue protein sequence, read N- to C-terminus: Shikimate dehydrogenase (NADP(+)) (260 aa).

Shikimate-binding positions include 14–16 and Thr60; that span reads SAS. Residue Lys64 is the Proton acceptor of the active site. 2 residues coordinate shikimate: Asn85 and Asp100. NADP(+)-binding positions include 121–125, 145–150, and Phe201; these read GAGGA and NRTYER. Tyr203 contributes to the shikimate binding site. Gly225 contributes to the NADP(+) binding site.

This sequence belongs to the shikimate dehydrogenase family. As to quaternary structure, homodimer.

The catalysed reaction is shikimate + NADP(+) = 3-dehydroshikimate + NADPH + H(+). It participates in metabolic intermediate biosynthesis; chorismate biosynthesis; chorismate from D-erythrose 4-phosphate and phosphoenolpyruvate: step 4/7. Functionally, involved in the biosynthesis of the chorismate, which leads to the biosynthesis of aromatic amino acids. Catalyzes the reversible NADPH linked reduction of 3-dehydroshikimate (DHSA) to yield shikimate (SA). The sequence is that of Shikimate dehydrogenase (NADP(+)) from Pyrobaculum neutrophilum (strain DSM 2338 / JCM 9278 / NBRC 100436 / V24Sta) (Thermoproteus neutrophilus).